A 552-amino-acid chain; its full sequence is Formate--tetrahydrofolate ligase (552 aa).

An ATP-binding site is contributed by 65–72 (TPAGEGKT).

Belongs to the formate--tetrahydrofolate ligase family.

The enzyme catalyses (6S)-5,6,7,8-tetrahydrofolate + formate + ATP = (6R)-10-formyltetrahydrofolate + ADP + phosphate. It participates in one-carbon metabolism; tetrahydrofolate interconversion. This chain is Formate--tetrahydrofolate ligase, found in Fervidobacterium nodosum (strain ATCC 35602 / DSM 5306 / Rt17-B1).